A 195-amino-acid polypeptide reads, in one-letter code: Protein GrpE (195 aa).

A compositionally biased stretch (basic and acidic residues) spans 1-18 (MDPKEKKTKQEEELKVDD). The interval 1 to 41 (MDPKEKKTKQEEELKVDDIQDTVEGQSQNEEATEATEPLTA) is disordered.

Belongs to the GrpE family. In terms of assembly, homodimer.

It is found in the cytoplasm. In terms of biological role, participates actively in the response to hyperosmotic and heat shock by preventing the aggregation of stress-denatured proteins, in association with DnaK and GrpE. It is the nucleotide exchange factor for DnaK and may function as a thermosensor. Unfolded proteins bind initially to DnaJ; upon interaction with the DnaJ-bound protein, DnaK hydrolyzes its bound ATP, resulting in the formation of a stable complex. GrpE releases ADP from DnaK; ATP binding to DnaK triggers the release of the substrate protein, thus completing the reaction cycle. Several rounds of ATP-dependent interactions between DnaJ, DnaK and GrpE are required for fully efficient folding. The protein is Protein GrpE of Bacteroides fragilis (strain ATCC 25285 / DSM 2151 / CCUG 4856 / JCM 11019 / LMG 10263 / NCTC 9343 / Onslow / VPI 2553 / EN-2).